Here is a 327-residue protein sequence, read N- to C-terminus: Lipoyl synthase (327 aa).

7 residues coordinate [4Fe-4S] cluster: Cys74, Cys79, Cys85, Cys100, Cys104, Cys107, and Ser314. Positions 86 to 303 (FSGGTATFMI…AEEGERMGFK (218 aa)) constitute a Radical SAM core domain.

It belongs to the radical SAM superfamily. Lipoyl synthase family. Requires [4Fe-4S] cluster as cofactor.

Its subcellular location is the cytoplasm. It catalyses the reaction [[Fe-S] cluster scaffold protein carrying a second [4Fe-4S](2+) cluster] + N(6)-octanoyl-L-lysyl-[protein] + 2 oxidized [2Fe-2S]-[ferredoxin] + 2 S-adenosyl-L-methionine + 4 H(+) = [[Fe-S] cluster scaffold protein] + N(6)-[(R)-dihydrolipoyl]-L-lysyl-[protein] + 4 Fe(3+) + 2 hydrogen sulfide + 2 5'-deoxyadenosine + 2 L-methionine + 2 reduced [2Fe-2S]-[ferredoxin]. It functions in the pathway protein modification; protein lipoylation via endogenous pathway; protein N(6)-(lipoyl)lysine from octanoyl-[acyl-carrier-protein]: step 2/2. Functionally, catalyzes the radical-mediated insertion of two sulfur atoms into the C-6 and C-8 positions of the octanoyl moiety bound to the lipoyl domains of lipoate-dependent enzymes, thereby converting the octanoylated domains into lipoylated derivatives. The protein is Lipoyl synthase of Pseudomonas paraeruginosa (strain DSM 24068 / PA7) (Pseudomonas aeruginosa (strain PA7)).